The following is a 302-amino-acid chain: Putative T-box protein 34 (302 aa).

Positions 5-180 (IVNEHKYREL…KMNLAPGSSQ (176 aa)) form a DNA-binding region, T-box.

It is found in the nucleus. This chain is Putative T-box protein 34 (tbx-34), found in Caenorhabditis elegans.